The chain runs to 114 residues: uncharacterized protein (114 aa).

Basic residues predominate over residues 18-29 (TRKRNSHKKVTK). Disordered regions lie at residues 18 to 47 (TRKR…RRTG) and 65 to 108 (SRPR…KLLN). The span at 30–41 (RAVEKRKQDSTR) shows a compositional bias: basic and acidic residues.

This is an uncharacterized protein from Homo sapiens (Human).